Reading from the N-terminus, the 465-residue chain is Ribulose bisphosphate carboxylase large chain (465 aa).

Lys-4 carries the N6,N6,N6-trimethyllysine modification. Residues Asn-113 and Thr-163 each contribute to the substrate site. The active-site Proton acceptor is Lys-165. Lys-167 is a substrate binding site. Residues Lys-191, Asp-193, and Glu-194 each coordinate Mg(2+). Lys-191 carries the N6-carboxylysine modification. His-284 serves as the catalytic Proton acceptor. Residues Arg-285, His-317, and Ser-369 each contribute to the substrate site.

The protein belongs to the RuBisCO large chain family. Type I subfamily. As to quaternary structure, heterohexadecamer of 8 large chains and 8 small chains; disulfide-linked. The disulfide link is formed within the large subunit homodimers. Mg(2+) is required as a cofactor. Post-translationally, the disulfide bond which can form in the large chain dimeric partners within the hexadecamer appears to be associated with oxidative stress and protein turnover.

It is found in the plastid. It localises to the chloroplast. It catalyses the reaction 2 (2R)-3-phosphoglycerate + 2 H(+) = D-ribulose 1,5-bisphosphate + CO2 + H2O. The catalysed reaction is D-ribulose 1,5-bisphosphate + O2 = 2-phosphoglycolate + (2R)-3-phosphoglycerate + 2 H(+). RuBisCO catalyzes two reactions: the carboxylation of D-ribulose 1,5-bisphosphate, the primary event in carbon dioxide fixation, as well as the oxidative fragmentation of the pentose substrate in the photorespiration process. Both reactions occur simultaneously and in competition at the same active site. In Casuarina equisetifolia (Beach she-oak), this protein is Ribulose bisphosphate carboxylase large chain.